The following is a 70-amino-acid chain: Sec-independent protein translocase protein TatA (70 aa).

Residues 1-21 (MGSFSIWHWLIVLVVVALLFG) form a helical membrane-spanning segment. A disordered region spans residues 45–70 (KGESEQAEDETAKPLPKERDKDSARG).

Belongs to the TatA/E family. In terms of assembly, the Tat system comprises two distinct complexes: a TatABC complex, containing multiple copies of TatA, TatB and TatC subunits, and a separate TatA complex, containing only TatA subunits. Substrates initially bind to the TatABC complex, which probably triggers association of the separate TatA complex to form the active translocon.

It localises to the cell inner membrane. Functionally, part of the twin-arginine translocation (Tat) system that transports large folded proteins containing a characteristic twin-arginine motif in their signal peptide across membranes. TatA could form the protein-conducting channel of the Tat system. This is Sec-independent protein translocase protein TatA from Phenylobacterium zucineum (strain HLK1).